The following is a 171-amino-acid chain: 3-hydroxydecanoyl-[acyl-carrier-protein] dehydratase (171 aa).

The active site involves histidine 70.

It belongs to the thioester dehydratase family. FabA subfamily. Homodimer.

The protein resides in the cytoplasm. The enzyme catalyses a (3R)-hydroxyacyl-[ACP] = a (2E)-enoyl-[ACP] + H2O. The catalysed reaction is (3R)-hydroxydecanoyl-[ACP] = (2E)-decenoyl-[ACP] + H2O. It carries out the reaction (2E)-decenoyl-[ACP] = (3Z)-decenoyl-[ACP]. The protein operates within lipid metabolism; fatty acid biosynthesis. Its function is as follows. Necessary for the introduction of cis unsaturation into fatty acids. Catalyzes the dehydration of (3R)-3-hydroxydecanoyl-ACP to E-(2)-decenoyl-ACP and then its isomerization to Z-(3)-decenoyl-ACP. Can catalyze the dehydratase reaction for beta-hydroxyacyl-ACPs with saturated chain lengths up to 16:0, being most active on intermediate chain length. The sequence is that of 3-hydroxydecanoyl-[acyl-carrier-protein] dehydratase from Marinomonas sp. (strain MWYL1).